We begin with the raw amino-acid sequence, 336 residues long: F-box protein At5g50450 (336 aa).

Residues 19–70 (NNHFEDLHDDLIISILRKLATSASSPSDFLTVLSTCKRLNRLGLHPLVLSKA) form the F-box domain. 8 residues coordinate Zn(2+): His263, Cys266, Cys279, Cys282, Cys288, Cys292, His301, and Cys305. Residues 263–305 (HGGCGRPETRAHEFRRCSVCGKVNYCSRGCQALDWRAKHKVEC) form an MYND-type; atypical zinc finger.

This is F-box protein At5g50450 from Arabidopsis thaliana (Mouse-ear cress).